A 188-amino-acid chain; its full sequence is Elongation factor P (188 aa).

N6-(3,6-diaminohexanoyl)-5-hydroxylysine is present on lysine 34.

It belongs to the elongation factor P family. In terms of processing, may be beta-lysylated on the epsilon-amino group of Lys-34 by the combined action of EpmA and EpmB, and then hydroxylated on the C5 position of the same residue by EpmC (if this protein is present). Lysylation is critical for the stimulatory effect of EF-P on peptide-bond formation. The lysylation moiety may extend toward the peptidyltransferase center and stabilize the terminal 3-CCA end of the tRNA. Hydroxylation of the C5 position on Lys-34 may allow additional potential stabilizing hydrogen-bond interactions with the P-tRNA.

Its subcellular location is the cytoplasm. The protein operates within protein biosynthesis; polypeptide chain elongation. In terms of biological role, involved in peptide bond synthesis. Alleviates ribosome stalling that occurs when 3 or more consecutive Pro residues or the sequence PPG is present in a protein, possibly by augmenting the peptidyl transferase activity of the ribosome. Modification of Lys-34 is required for alleviation. This chain is Elongation factor P, found in Vibrio campbellii (strain ATCC BAA-1116).